A 340-amino-acid chain; its full sequence is Dihydroorotate dehydrogenase (quinone) (340 aa).

FMN is bound by residues 61–65 and threonine 85; that span reads AGLDK. Residue lysine 65 participates in substrate binding. 110–114 serves as a coordination point for substrate; the sequence is NRMGF. 2 residues coordinate FMN: asparagine 138 and asparagine 171. Asparagine 171 provides a ligand contact to substrate. Serine 174 serves as the catalytic Nucleophile. Asparagine 176 contacts substrate. 2 residues coordinate FMN: lysine 216 and threonine 244. 245-246 contacts substrate; it reads NT. Residues glycine 267, glycine 296, and 317-318 contribute to the FMN site; that span reads YS.

It belongs to the dihydroorotate dehydrogenase family. Type 2 subfamily. In terms of assembly, monomer. It depends on FMN as a cofactor.

The protein localises to the cell membrane. The catalysed reaction is (S)-dihydroorotate + a quinone = orotate + a quinol. It functions in the pathway pyrimidine metabolism; UMP biosynthesis via de novo pathway; orotate from (S)-dihydroorotate (quinone route): step 1/1. In terms of biological role, catalyzes the conversion of dihydroorotate to orotate with quinone as electron acceptor. This is Dihydroorotate dehydrogenase (quinone) from Ectopseudomonas mendocina (strain ymp) (Pseudomonas mendocina).